We begin with the raw amino-acid sequence, 380 residues long: Erythronate-4-phosphate dehydrogenase (380 aa).

Substrate-binding residues include Ser-45 and Thr-66. Residues Asp-146, Thr-174, 205–207, and Asp-231 contribute to the NAD(+) site; that span reads ASR. The active site involves Arg-207. Glu-236 is an active-site residue. The active-site Proton donor is His-253. Gly-256 contributes to the NAD(+) binding site. Position 257 (Tyr-257) interacts with substrate.

This sequence belongs to the D-isomer specific 2-hydroxyacid dehydrogenase family. PdxB subfamily. In terms of assembly, homodimer.

It is found in the cytoplasm. The enzyme catalyses 4-phospho-D-erythronate + NAD(+) = (R)-3-hydroxy-2-oxo-4-phosphooxybutanoate + NADH + H(+). It participates in cofactor biosynthesis; pyridoxine 5'-phosphate biosynthesis; pyridoxine 5'-phosphate from D-erythrose 4-phosphate: step 2/5. Catalyzes the oxidation of erythronate-4-phosphate to 3-hydroxy-2-oxo-4-phosphonooxybutanoate. The protein is Erythronate-4-phosphate dehydrogenase of Pseudomonas putida (strain ATCC 700007 / DSM 6899 / JCM 31910 / BCRC 17059 / LMG 24140 / F1).